A 763-amino-acid chain; its full sequence is Phosphoglycerol transferase I (763 aa).

The next 4 helical transmembrane spans lie at 4 to 19 (LLSF…IYAW), 26 to 48 (WWFA…LFAS), 76 to 98 (YILP…GWIL), and 105 to 127 (PHHF…ASPA).

The protein belongs to the OpgB family.

It localises to the cell inner membrane. The catalysed reaction is a phosphatidylglycerol + a membrane-derived-oligosaccharide D-glucose = a 1,2-diacyl-sn-glycerol + a membrane-derived-oligosaccharide 6-(glycerophospho)-D-glucose.. The protein operates within glycan metabolism; osmoregulated periplasmic glucan (OPG) biosynthesis. Transfers a phosphoglycerol residue from phosphatidylglycerol to the membrane-bound nascent glucan backbones. The sequence is that of Phosphoglycerol transferase I from Escherichia coli O6:H1 (strain CFT073 / ATCC 700928 / UPEC).